A 96-amino-acid polypeptide reads, in one-letter code: Glutamyl-tRNA(Gln) amidotransferase subunit C (96 aa).

It belongs to the GatC family. As to quaternary structure, heterotrimer of A, B and C subunits.

The catalysed reaction is L-glutamyl-tRNA(Gln) + L-glutamine + ATP + H2O = L-glutaminyl-tRNA(Gln) + L-glutamate + ADP + phosphate + H(+). It catalyses the reaction L-aspartyl-tRNA(Asn) + L-glutamine + ATP + H2O = L-asparaginyl-tRNA(Asn) + L-glutamate + ADP + phosphate + 2 H(+). In terms of biological role, allows the formation of correctly charged Asn-tRNA(Asn) or Gln-tRNA(Gln) through the transamidation of misacylated Asp-tRNA(Asn) or Glu-tRNA(Gln) in organisms which lack either or both of asparaginyl-tRNA or glutaminyl-tRNA synthetases. The reaction takes place in the presence of glutamine and ATP through an activated phospho-Asp-tRNA(Asn) or phospho-Glu-tRNA(Gln). The polypeptide is Glutamyl-tRNA(Gln) amidotransferase subunit C (Nostoc sp. (strain PCC 7120 / SAG 25.82 / UTEX 2576)).